A 588-amino-acid polypeptide reads, in one-letter code: Aspartate--tRNA ligase (588 aa).

Residue Glu-172 coordinates L-aspartate. The aspartate stretch occupies residues 196–199 (QLFK). Arg-218 is an L-aspartate binding site. Residues 218-220 (RDE) and Gln-227 each bind ATP. His-449 lines the L-aspartate pocket. An ATP-binding site is contributed by Glu-483. Residue Arg-490 participates in L-aspartate binding. Residue 535 to 538 (GLDR) coordinates ATP.

This sequence belongs to the class-II aminoacyl-tRNA synthetase family. Type 1 subfamily. Homodimer.

Its subcellular location is the cytoplasm. The catalysed reaction is tRNA(Asp) + L-aspartate + ATP = L-aspartyl-tRNA(Asp) + AMP + diphosphate. Its function is as follows. Catalyzes the attachment of L-aspartate to tRNA(Asp) in a two-step reaction: L-aspartate is first activated by ATP to form Asp-AMP and then transferred to the acceptor end of tRNA(Asp). The polypeptide is Aspartate--tRNA ligase (Haemophilus influenzae (strain PittGG)).